The sequence spans 286 residues: Replication protein RepA (286 aa).

The protein belongs to the initiator RepB protein family.

Its function is as follows. RepA is essential for origin function, autoregulates its own synthesis from the promoter, and, when overproduced, blocks origin function. The protein is Replication protein RepA (repA) of Escherichia coli.